A 451-amino-acid polypeptide reads, in one-letter code: MSEVSKWPAINPFHWGYNGTVSHIVGENGSIKLHLKDNKEQVDFDEFANKYVPTLKNGAQFKLSPYLFTGILQTLYLGAADFSKKFPVFYGREIVKFSDGGVCTADWLIDSWKKDYEFDQSTTSFDKKKFDKDEKATHPEGWPRLQPRTRYLKDNELEELREVDLPLVVILHGLAGGSHEPIIRSLAENLSRSGRFQVVVLNTRGCARSKITTRNLFTAYHTMDIREFLQREKQRHPDRKLYAVGCSFGATMLANYLGEEGDKSPLSAAATLCNPWDLLLSAIRMSQDWWSRTLFSKNIAQFLTRTVQVNMGELGVPNGSLPDHPPTVKNPSFYMFTPENLIKAKSFKSTREFDEVYTAPALGFPNAMEYYKAASSINRVDTIRVPTLVINSRDDPVVGPDQPYSIVEKNPRILYCRTDLGGHLAYLDKDNNSWATKAIAEFFTKFDELVV.

Residue Lys114 forms a Glycyl lysine isopeptide (Lys-Gly) (interchain with G-Cter in ubiquitin) linkage. The AB hydrolase-1 domain occupies 166-430 (PLVVILHGLA…GGHLAYLDKD (265 aa)). Residues Ser247, Asp395, and His423 each act as charge relay system in the active site.

This sequence belongs to the AB hydrolase superfamily. AB hydrolase 4 family.

The catalysed reaction is an aliphatic alcohol + acetyl-CoA = an acetyl ester + CoA. In terms of biological role, displays enzymatic activity both for medium-chain fatty acid (MCFA) ethyl ester synthesis and hydrolysis (esterase activity). MCFA are toxic for yeast and this enzyme could thus be involved in their detoxification by esterification. The sequence is that of Medium-chain fatty acid ethyl ester synthase/esterase 2 (EHT1) from Saccharomyces cerevisiae (strain ATCC 204508 / S288c) (Baker's yeast).